Reading from the N-terminus, the 112-residue chain is Large ribosomal subunit protein P1 (112 aa).

The segment covering 71–90 (PAQAAAAAPAGGAPAAAAPA) has biased composition (low complexity). The tract at residues 71–112 (PAQAAAAAPAGGAPAAAAPAESKEGRRSQGESDDDMGFGLLD) is disordered. A compositionally biased stretch (basic and acidic residues) spans 91 to 100 (ESKEGRRSQG).

This sequence belongs to the eukaryotic ribosomal protein P1/P2 family. In terms of assembly, P1 and P2 exist as dimers at the large ribosomal subunit.

Its function is as follows. Plays an important role in the elongation step of protein synthesis. This chain is Large ribosomal subunit protein P1 (rpl-21), found in Oscheius tipulae.